The primary structure comprises 293 residues: Homeobox protein ceh-24 (293 aa).

2 stretches are compositionally biased toward basic and acidic residues: residues 1-15 and 22-38; these read MSEK…KKDE and QETK…MKIK. Disordered stretches follow at residues 1–38 and 203–256; these read MSEK…MKIK and EKEK…SNGV. The segment at residues 144–203 is a DNA-binding region (homeobox); it reads RRKRRVLFSQAQVYELERRFKQAKYLTAPEREQLANSIRLTPTQVKIWFQNHRYKCKRQE.

Belongs to the NK-2 homeobox family. In terms of tissue distribution, expressed in the 8 vulval muscles, 8-10 ventral neurons in the head and in the most posterior pharyngeal muscle cell, m8.

Its subcellular location is the nucleus. Probable transcriptional regulator that is required in neural development for the normal formation of sublateral cholinergic motor neuron processes. Plays a role in regulating the expression of acetylcholine transporter protein unc-17 in the sublateral processes. In particular, it is required in sublateral motor neurons for a left-right turning behavior that occurs during the lethargus phase of the normal sleep process called 'flipping'. During 'flipping' animals rotate 180 degrees about their longitudinal axis. The polypeptide is Homeobox protein ceh-24 (Caenorhabditis briggsae).